Here is a 400-residue protein sequence, read N- to C-terminus: Argininosuccinate synthase (400 aa).

An ATP-binding site is contributed by 8–16 (AYSGGLDTS). L-citrulline is bound at residue Tyr-87. Gly-117 contacts ATP. Thr-119, Asn-123, and Asp-124 together coordinate L-aspartate. An L-citrulline-binding site is contributed by Asn-123. The L-citrulline site is built by Arg-127, Ser-175, Glu-260, and Tyr-272.

This sequence belongs to the argininosuccinate synthase family. Type 1 subfamily. As to quaternary structure, homotetramer.

Its subcellular location is the cytoplasm. The enzyme catalyses L-citrulline + L-aspartate + ATP = 2-(N(omega)-L-arginino)succinate + AMP + diphosphate + H(+). The protein operates within amino-acid biosynthesis; L-arginine biosynthesis; L-arginine from L-ornithine and carbamoyl phosphate: step 2/3. This is Argininosuccinate synthase from Mycobacterium sp. (strain KMS).